A 565-amino-acid chain; its full sequence is Sulfite reductase [NADPH] hemoprotein beta-component (565 aa).

4 residues coordinate [4Fe-4S] cluster: C429, C435, C474, and C478. C478 serves as a coordination point for siroheme.

Belongs to the nitrite and sulfite reductase 4Fe-4S domain family. Alpha(8)-beta(8). The alpha component is a flavoprotein, the beta component is a hemoprotein. Siroheme serves as cofactor. It depends on [4Fe-4S] cluster as a cofactor.

The catalysed reaction is hydrogen sulfide + 3 NADP(+) + 3 H2O = sulfite + 3 NADPH + 4 H(+). The protein operates within sulfur metabolism; hydrogen sulfide biosynthesis; hydrogen sulfide from sulfite (NADPH route): step 1/1. Component of the sulfite reductase complex that catalyzes the 6-electron reduction of sulfite to sulfide. This is one of several activities required for the biosynthesis of L-cysteine from sulfate. This Shewanella putrefaciens (strain CN-32 / ATCC BAA-453) protein is Sulfite reductase [NADPH] hemoprotein beta-component.